The following is an 892-amino-acid chain: MGDHHNLTGLPGTSIPPQFNYSQPGTSTGGPLYGGKPSHGLEDIPDVEEYERNLLGAGAGFNLLNVGNMANEFKPIITLDTKPPRDANKSLAFNGGLKLITPKTEVPDEHTPMMSPVNTTTKILQRSGIKMEIPPYLDPDSQDDDPEDGVNYPDPDLFDTKNTNMTEYDLDVLKLGKPAVDEARKKIEVPDASAPPNKIVEYLMYYRTLKESELIQLNAYRTKRNRLSLNLVKNNIDREFDQKACESLVKKLKDKKNDLQNLIDVVLSKGTKYTGCITIPRTLDGRLQVHGRKGFPHVVYGKLWRFNEMTKNETRHVDHCKHAFEMKSDMVCVNPYHYEIVIGTMIVGQRDHDNRDMPPPHQRYHTPGRQDPVDDMSRFIPPASIRPPPMNMHTRPQPMPQQLPSVGATFAHPLPHQAPHNPGVSHPYSIAPQTHYPLNMNPIPQMPQMPQMPPPLHQGYGMNGPSCSSENNNPFHQNHHYNDISHPNHYSYDCGPNLYGFPTPYPDFHHPFNQQPHQPPQLSQNHTSQQGSHQPGHQGQVPNDPPISRPVLQPSTVTLDVFRRYCRQTFGNRFFEGESEQSGAIIRSSNKFIEEFDSPICGVTVVRPRMTDGEVLENIMPEDAPYHDICKFILRLTSESVTFSGEGPEVSDLNEKWGTIVYYEKNLQIGEKKCSRGNFHVDGGFICSENRYSLGLEPNPIREPVAFKVRKAIVDGIRFSYKKDGSVWLQNRMKYPVFVTSGYLDEQSGGLKKDKVHKVYGCASIKTFGFNVSKQIIRDALLSKQMATMYLQGKLTPMNYIYEKKTQEELRREATRTTDSLAKYCCVRVSFCKGFGEAYPERPSIHDCPVWIELKINIAYDFMDSICQYITNCFEPLGMEDFAKLGINVSDD.

2 disordered regions span residues M1 to D43 and P135 to K161. Polar residues predominate over residues I15–T26. The MH1 domain occupies K198–V347. Residues Y505 to L552 form a disordered region. Over residues S528 to Q540 the composition is skewed to low complexity. The MH2 domain occupies W657–E880.

It belongs to the dwarfin/SMAD family. In terms of assembly, interacts with R-SMADs daf-8 and daf-14. Interacts with daf-14 in a daf-8 dependent manner. May interact with daf-5.

The protein resides in the cytoplasm. It localises to the nucleus. It is found in the chromosome. Functionally, transcriptional regulator and common SMAD (co-SMAD), required to regulate entry into a developmentally arrested larval state known as dauer, in response to harsh environmental conditions. Probable component of transcriptional regulatory complex with SMAD protein daf-5. Acts antagonistically to SMAD signaling downstream of TGF-beta-like daf-7 signaling. Binds to the 5'-GTCTG-3' motif found in regulatory regions and may modulate the expression of genes involved in TGF-beta-like daf-7 and Notch lag-2 signaling. May regulate gene expression outside the dauer pathway. This Caenorhabditis elegans protein is Smad protein daf-3.